The chain runs to 262 residues: 26 kDa secreted antigen (262 aa).

The N-terminal stretch at 1–21 (MSVVHKACLIALLFVSSGVAQ) is a signal peptide. ShKT domains follow at residues 23–57 (CMDS…CNTC) and 59–93 (CRDE…CGLC). Cystine bridges form between Cys-23–Cys-57, Cys-30–Cys-50, Cys-37–Cys-54, Cys-59–Cys-93, Cys-66–Cys-86, and Cys-73–Cys-90.

The protein belongs to the phosphatidylethanolamine-binding protein family.

It is found in the secreted. In terms of biological role, binds phosphatidylethanolamine. This is 26 kDa secreted antigen (TES-26) from Toxocara canis (Canine roundworm).